Reading from the N-terminus, the 191-residue chain is Protein YceI (191 aa).

The N-terminal stretch at 1-22 is a signal peptide; it reads MKKSLLGLTFASLMFSAGSAVA.

This sequence belongs to the UPF0312 family. Type 1 subfamily.

It is found in the periplasm. In Escherichia coli O17:K52:H18 (strain UMN026 / ExPEC), this protein is Protein YceI.